A 427-amino-acid polypeptide reads, in one-letter code: Transcription termination factor Rho (427 aa).

Residues 55-130 (YFFGEGVLEI…IKIEAINYRP (76 aa)) form the Rho RNA-BD domain. ATP contacts are provided by residues 173-178 (GKGQRG), 185-190 (KAGKTT), and Arg216.

The protein belongs to the Rho family. As to quaternary structure, homohexamer. The homohexamer assembles into an open ring structure.

Its function is as follows. Facilitates transcription termination by a mechanism that involves Rho binding to the nascent RNA, activation of Rho's RNA-dependent ATPase activity, and release of the mRNA from the DNA template. The polypeptide is Transcription termination factor Rho (Thermotoga maritima (strain ATCC 43589 / DSM 3109 / JCM 10099 / NBRC 100826 / MSB8)).